A 334-amino-acid polypeptide reads, in one-letter code: Anthranilate phosphoribosyltransferase (334 aa).

5-phospho-alpha-D-ribose 1-diphosphate is bound by residues glycine 79, 82-83 (GD), serine 87, 89-92 (NIST), 107-115 (KHGNRSISS), and serine 119. Glycine 79 contacts anthranilate. Serine 91 provides a ligand contact to Mg(2+). An anthranilate-binding site is contributed by asparagine 110. Arginine 165 lines the anthranilate pocket. Residues aspartate 224 and glutamate 225 each coordinate Mg(2+).

The protein belongs to the anthranilate phosphoribosyltransferase family. As to quaternary structure, homodimer. The cofactor is Mg(2+).

The catalysed reaction is N-(5-phospho-beta-D-ribosyl)anthranilate + diphosphate = 5-phospho-alpha-D-ribose 1-diphosphate + anthranilate. It participates in amino-acid biosynthesis; L-tryptophan biosynthesis; L-tryptophan from chorismate: step 2/5. Its function is as follows. Catalyzes the transfer of the phosphoribosyl group of 5-phosphorylribose-1-pyrophosphate (PRPP) to anthranilate to yield N-(5'-phosphoribosyl)-anthranilate (PRA). This chain is Anthranilate phosphoribosyltransferase, found in Streptococcus gordonii (strain Challis / ATCC 35105 / BCRC 15272 / CH1 / DL1 / V288).